Reading from the N-terminus, the 39-residue chain is Photosystem II reaction center protein L (39 aa).

Residues Ser18–Phe38 form a helical membrane-spanning segment.

The protein belongs to the PsbL family. In terms of assembly, PSII is composed of 1 copy each of membrane proteins PsbA, PsbB, PsbC, PsbD, PsbE, PsbF, PsbH, PsbI, PsbJ, PsbK, PsbL, PsbM, PsbT, PsbX, PsbY, Psb30/Ycf12, peripheral proteins PsbO, CyanoQ (PsbQ), PsbU, PsbV and a large number of cofactors. It forms dimeric complexes.

It is found in the cellular thylakoid membrane. One of the components of the core complex of photosystem II (PSII). PSII is a light-driven water:plastoquinone oxidoreductase that uses light energy to abstract electrons from H(2)O, generating O(2) and a proton gradient subsequently used for ATP formation. It consists of a core antenna complex that captures photons, and an electron transfer chain that converts photonic excitation into a charge separation. This subunit is found at the monomer-monomer interface and is required for correct PSII assembly and/or dimerization. In Prochlorococcus marinus (strain NATL2A), this protein is Photosystem II reaction center protein L.